The following is a 64-amino-acid chain: MAVPKRKVSKSRRDSRRAQTFRLEAPNLSPCPNCRTPRLPHRVCPNCGYYQGRVVIQHEAEAAE.

Residues 1–15 (MAVPKRKVSKSRRDS) are compositionally biased toward basic residues. The disordered stretch occupies residues 1-21 (MAVPKRKVSKSRRDSRRAQTF).

The protein belongs to the bacterial ribosomal protein bL32 family.

The polypeptide is Large ribosomal subunit protein bL32 (Symbiobacterium thermophilum (strain DSM 24528 / JCM 14929 / IAM 14863 / T)).